A 492-amino-acid polypeptide reads, in one-letter code: Peptidyl-prolyl cis-trans isomerase-like 4 (492 aa).

Residues 1-161 enclose the PPIase cyclophilin-type domain; it reads MAVLLETTLG…QDIRINHTVI (161 aa). The tract at residues 167–188 is disordered; sequence DDPPDLLIPDRSPEPTREQLDS. Residues 177–187 show a composition bias toward basic and acidic residues; it reads RSPEPTREQLD. S178 is subject to Phosphoserine. At T182 the chain carries Phosphothreonine. Residues K201, K212, and K218 each participate in a glycyl lysine isopeptide (Lys-Gly) (interchain with G-Cter in SUMO2) cross-link. The RRM domain maps to 240–318; the sequence is NVLFVCKLNP…RRIHVDFSQS (79 aa). Residues K321 and K362 each participate in a glycyl lysine isopeptide (Lys-Gly) (interchain with G-Cter in SUMO2) cross-link. Disordered regions lie at residues 368–406 and 423–492; these read DEQAEDSKSSHSHTSKKHKKKTHHCSEEKEDEDYMPIKN and EESC…SKYR. A compositionally biased stretch (basic residues) spans 377–390; the sequence is SHSHTSKKHKKKTH. A Phosphoserine modification is found at S393. K405 participates in a covalent cross-link: Glycyl lysine isopeptide (Lys-Gly) (interchain with G-Cter in SUMO2). Residues 426–452 are compositionally biased toward basic and acidic residues; that stretch reads CWEKQKSEKRDRTQNRSRSRSRERDGH. K460 participates in a covalent cross-link: Glycyl lysine isopeptide (Lys-Gly) (interchain with G-Cter in SUMO2). S471 carries the post-translational modification Phosphoserine. Basic and acidic residues predominate over residues 482–492; the sequence is KSKDKEKSKYR.

The protein belongs to the cyclophilin-type PPIase family. PPIL4 subfamily. As to expression, abundantly expressed in kidney but has a ubiquitously low expression pattern in other adult tissues.

The protein localises to the nucleus. It catalyses the reaction [protein]-peptidylproline (omega=180) = [protein]-peptidylproline (omega=0). PPIases accelerate the folding of proteins. It catalyzes the cis-trans isomerization of proline imidic peptide bonds in oligopeptides. The sequence is that of Peptidyl-prolyl cis-trans isomerase-like 4 (PPIL4) from Homo sapiens (Human).